Consider the following 90-residue polypeptide: DNA-directed RNA polymerase subunit omega (90 aa).

A disordered region spans residues 69–90; that stretch reads RQEQQEQEAAELAAVSSIAHNR.

The protein belongs to the RNA polymerase subunit omega family. The RNAP catalytic core consists of 2 alpha, 1 beta, 1 beta' and 1 omega subunit. When a sigma factor is associated with the core the holoenzyme is formed, which can initiate transcription.

The enzyme catalyses RNA(n) + a ribonucleoside 5'-triphosphate = RNA(n+1) + diphosphate. Functionally, promotes RNA polymerase assembly. Latches the N- and C-terminal regions of the beta' subunit thereby facilitating its interaction with the beta and alpha subunits. The chain is DNA-directed RNA polymerase subunit omega from Vibrio parahaemolyticus serotype O3:K6 (strain RIMD 2210633).